Here is a 329-residue protein sequence, read N- to C-terminus: MKKIFFAQCSILLLMLGSCSKMTEDMTPESVNKEASVKSATALAGSNGVCIAYYITDGRNPTFKLKDIPDKVDMVILFGLKYWSLQDTTKLPGGTGMMGSFKSYKDLDTQIRSLQSRGIKVLQNIDDDVSWQSSKPGGFASAAAYGDAIKSIVIDKWKLDGISLDIEHSGAKPNPIPTFPGYAATGYNGWYSGSMAATPAFLNVISELTKYFGTTAPNNKQLQIASGIDVYAWNKIMENFRNNFNYIQLQSYGANVSRTQLMMNYATGTNKIPASKMVFGAYAEGGTNQANDVEVAKWTPTQGAKGGMMIYTYNSNVSYANAVRDAVKN.

Positions 1–39 (MKKIFFAQCSILLLMLGSCSKMTEDMTPESVNKEASVKS) form a signal peptide, or 40, or 41. In terms of domain architecture, GH18 spans 48-329 (GVCIAYYITD…ANAVRDAVKN (282 aa)). An O-linked (Man...) threonine glycan is attached at T88. The Proton donor role is filled by E167.

This sequence belongs to the glycosyl hydrolase 18 family. As to quaternary structure, monomer. In terms of processing, carbohydrate at Thr-88 consists of (2-OMe)Man1-4GlcNAcU1-4GlcU1-4Glc1-4(2-OMe)GlcU1-4[(2-OMe)Rham1-2]Man.

It localises to the secreted. The enzyme catalyses an N(4)-(oligosaccharide-(1-&gt;3)-[oligosaccharide-(1-&gt;6)]-beta-D-Man-(1-&gt;4)-beta-D-GlcNAc-(1-&gt;4)-alpha-D-GlcNAc)-L-asparaginyl-[protein] + H2O = an oligosaccharide-(1-&gt;3)-[oligosaccharide-(1-&gt;6)]-beta-D-Man-(1-&gt;4)-D-GlcNAc + N(4)-(N-acetyl-beta-D-glucosaminyl)-L-asparaginyl-[protein]. Functionally, endohydrolysis of the di-N-acetylchitobiosyl unit in high-mannose glycopeptides and glycoproteins. Hydrolyzes bi- and triantennary glycans. The presence of a core-bound fucose greatly augments endo F3 activity on biantennary and, presumably, triantennary oligosaccharides. In Elizabethkingia meningoseptica (Chryseobacterium meningosepticum), this protein is Endo-beta-N-acetylglucosaminidase F3 (endOF3).